The chain runs to 1460 residues: Venom prothrombin activator omicarin-C non-catalytic subunit (1460 aa).

An N-terminal signal peptide occupies residues 1–30 (MGRYSVSPVPKCLLLMFLGWSGLKYYQVNA). 4 Plastocyanin-like domains span residues 32–196 (QLRE…LLIC), 206–330 (AQKF…LNIK), 351–529 (MNWE…LLVC), and 539–685 (VQNK…FLDA). F5/8 type A domains follow at residues 32-330 (QLRE…LNIK) and 350-685 (IMNW…FLDA). Ca(2+)-binding residues include K124, E139, D142, and D143. N-linked (GlcNAc...) asparagine glycosylation is present at N156. C170 and C196 are disulfide-bonded. N-linked (GlcNAc...) asparagine glycans are attached at residues N242, N300, N385, N406, and N471. C251 and C332 are oxidised to a cystine. C503 and C529 are disulfide-bonded. N557 carries an N-linked (GlcNAc...) asparagine glycan. 4 disulfides stabilise this stretch: C672–C1031, C965–C991, C1147–C1298, and C1303–C1457. The tract at residues 693-817 (GNEEEEEDDG…SDDIAGRYLR (125 aa)) is b. The interval 740-760 (LLDDEDNPEQSRSEQTEDDEE) is disordered. The propeptide at 772 to 817 (SFKGSVAEEELKHTALALEEDAHASDPRIDSNSARNSDDIAGRYLR) is activation peptide (connecting region). Plastocyanin-like domains lie at 823-991 (NKRR…ILIC) and 1000-1143 (NRTI…FTVI). The 321-residue stretch at 823–1143 (NKRRYYIAAE…RGMQALFTVI (321 aa)) folds into the F5/8 type A 3 domain. Ca(2+) contacts are provided by K919, F934, D937, and D938. Residue N943 is glycosylated (N-linked (GlcNAc...) asparagine). N-linked (GlcNAc...) asparagine glycans are attached at residues N1000, N1180, and N1397. 2 F5/8 type C domains span residues 1147 to 1298 (CKLP…LLGC) and 1303 to 1457 (CSVP…LFGC).

Belongs to the multicopper oxidase family. In terms of assembly, heterodimer of a light and a heavy chains; non-disulfide-linked. The interaction between the two chains is calcium-dependent. Found in its active form associated with omicarin-C catalytic subunit (AC Q58L95). In physiological conditions, blood coagulation factor V and factor Va are inactivated by activated protein C (APC) through proteolytic degradation of the heavy chain. However, omicarin-C non-catalytic subunit (factor V-like protein) retains its full activity even at high concentration of APC. This has two explanations: this protein has only one of the three cleavage sites present in factor V that are targeted by the APC for inactivation, and the binding with the catalytic subunit protect the cleavage site from inactivation. Expressed by the venom gland.

The protein localises to the secreted. Functionally, snake prothrombin activator that attacks the hemostatic system of prey. This non-catalytic subunit is functionally similar to blood coagulation factor V. It serves as a critical cofactor for the prothrombinase activity of the catalytic subunit, which is similar to the blood coagulation factor X. The complex converts prothrombin to thrombin by sequential cleavage at two positions, Arg-320 followed by Arg-271. Cleavage at Arg-320 produces an active intermediate known as meizothrombin. Meizothrombin is the 'second' substrate for prothrombinase, and it docks in an altered manner to present the second cleavage site (271). Cleavage at Arg-271 releases active thrombin from its pro-fragment. This order of events is reversed if the protease component of prothrombinase is used on its own, suggesting that the 271 site is inherently more accessible to proteolysis. This chain is Venom prothrombin activator omicarin-C non-catalytic subunit, found in Oxyuranus microlepidotus (Inland taipan).